A 158-amino-acid chain; its full sequence is NADPH-dependent 7-cyano-7-deazaguanine reductase (158 aa).

The active-site Thioimide intermediate is the Cys-56. Residue Asp-63 is the Proton donor of the active site. Substrate is bound by residues 78–80 (LES) and 97–98 (HE).

The protein belongs to the GTP cyclohydrolase I family. QueF type 1 subfamily.

It is found in the cytoplasm. The enzyme catalyses 7-aminomethyl-7-carbaguanine + 2 NADP(+) = 7-cyano-7-deazaguanine + 2 NADPH + 3 H(+). Its pathway is tRNA modification; tRNA-queuosine biosynthesis. Functionally, catalyzes the NADPH-dependent reduction of 7-cyano-7-deazaguanine (preQ0) to 7-aminomethyl-7-deazaguanine (preQ1). The polypeptide is NADPH-dependent 7-cyano-7-deazaguanine reductase (Nitrobacter hamburgensis (strain DSM 10229 / NCIMB 13809 / X14)).